The following is a 295-amino-acid chain: Phosphoribosylaminoimidazole-succinocarboxamide synthase (295 aa).

Belongs to the SAICAR synthetase family.

It carries out the reaction 5-amino-1-(5-phospho-D-ribosyl)imidazole-4-carboxylate + L-aspartate + ATP = (2S)-2-[5-amino-1-(5-phospho-beta-D-ribosyl)imidazole-4-carboxamido]succinate + ADP + phosphate + 2 H(+). It functions in the pathway purine metabolism; IMP biosynthesis via de novo pathway; 5-amino-1-(5-phospho-D-ribosyl)imidazole-4-carboxamide from 5-amino-1-(5-phospho-D-ribosyl)imidazole-4-carboxylate: step 1/2. The polypeptide is Phosphoribosylaminoimidazole-succinocarboxamide synthase (Nitrosomonas europaea (strain ATCC 19718 / CIP 103999 / KCTC 2705 / NBRC 14298)).